A 581-amino-acid chain; its full sequence is Proline--tRNA ligase (581 aa).

This sequence belongs to the class-II aminoacyl-tRNA synthetase family. ProS type 1 subfamily. As to quaternary structure, homodimer.

The protein localises to the cytoplasm. It carries out the reaction tRNA(Pro) + L-proline + ATP = L-prolyl-tRNA(Pro) + AMP + diphosphate. Its function is as follows. Catalyzes the attachment of proline to tRNA(Pro) in a two-step reaction: proline is first activated by ATP to form Pro-AMP and then transferred to the acceptor end of tRNA(Pro). As ProRS can inadvertently accommodate and process non-cognate amino acids such as alanine and cysteine, to avoid such errors it has two additional distinct editing activities against alanine. One activity is designated as 'pretransfer' editing and involves the tRNA(Pro)-independent hydrolysis of activated Ala-AMP. The other activity is designated 'posttransfer' editing and involves deacylation of mischarged Ala-tRNA(Pro). The misacylated Cys-tRNA(Pro) is not edited by ProRS. In Rhodococcus erythropolis (strain PR4 / NBRC 100887), this protein is Proline--tRNA ligase.